The following is a 181-amino-acid chain: Lectin beta-1 and beta-2 chains (181 aa).

Positions 119 and 121 each coordinate Mn(2+). Ca(2+)-binding residues include aspartate 121, phenylalanine 123, asparagine 125, and aspartate 129. Mn(2+) contacts are provided by aspartate 129 and histidine 136.

The protein belongs to the leguminous lectin family. In terms of assembly, tetramer of two alpha and two beta chains.

This is Lectin beta-1 and beta-2 chains from Lathyrus ochrus (Cyprus-vetch).